A 374-amino-acid chain; its full sequence is Translocating chain-associated membrane protein 1 (374 aa).

Residues 1-29 (MAIRKKSSKNPPVLSHEFVLQNHADIVSC) are Cytoplasmic-facing. Residues 30–50 (VAMVFLLGLMFEITAKVSIIF) form a helical membrane-spanning segment. Residues 51–81 (VTLQYNVTLPATEEQATESAFLYYYGIKDLA) lie on the Lumenal side of the membrane. Asn56 is a glycosylation site (N-linked (GlcNAc...) asparagine). Residues 82 to 102 (TVFFYMLVAIIIHAIIQEYVL) traverse the membrane as a helical segment. The Cytoplasmic portion of the chain corresponds to 103-121 (DKINRRMHFSKTKHSKFNE). One can recognise a TLC domain in the interval 117–326 (SKFNESGQLS…NFQLRRWREH (210 aa)). A helical membrane pass occupies residues 122–142 (SGQLSAFYLFSCIWGTFILIS). The Lumenal segment spans residues 143–159 (ENYISDPTILWRAYPHN). Residues 160-180 (LMTFQMKFFYISQLAYWFHAF) form a helical membrane-spanning segment. The Cytoplasmic portion of the chain corresponds to 181–192 (PELYFQKTKKED). The chain crosses the membrane as a helical span at residues 193-213 (IPRQLVYIGLYLFHIAGAYLL). Residue Asn214 is a topological domain, lumenal. A helical membrane pass occupies residues 215–235 (LNHLGLVLLVLHYFVEFLFHI). Topologically, residues 236 to 251 (SRLFYFSDEKYQKGFS) are cytoplasmic. Residues 252 to 272 (LWAVLFVLGRLLTLILSVLTV) form a helical membrane-spanning segment. At 273 to 297 (GFGLARAENQKLDFSTGNFNVLAVR) the chain is on the lumenal side. The chain crosses the membrane as a helical span at residues 298–318 (IAVLASICITQAFMMWKFINF). Topologically, residues 319 to 374 (QLRRWREHSAFQAPAVKKKPPVTKGRSSRKGTENGVNGTVTSNGADSPRNRKEKSS) are cytoplasmic. Positions 331-374 (APAVKKKPPVTKGRSSRKGTENGVNGTVTSNGADSPRNRKEKSS) are disordered. Positions 334–347 (VKKKPPVTKGRSSR) are enriched in basic residues. The span at 352–363 (NGVNGTVTSNGA) shows a compositional bias: polar residues. Position 365 is a phosphoserine (Ser365).

The protein belongs to the TRAM family. Interacts with SEC61B. May interact with Derlin-1/DERL1. N-glycosylated.

It is found in the endoplasmic reticulum membrane. Involved in the translocation of nascent protein chains into or through the endoplasmic reticulum (ER) membrane by facilitating the proper chain positioning at the SEC61 channel. Regulates the exposure of nascent secretory protein chain to the cytosol during translocation into the ER. May affect the phospholipid bilayer in the vicinity of the lateral gate of the SEC61 channel, thereby facilitating ER protein transport. Intimately associates with transmembrane (TM) domain of nascent membrane proteins during the entire integration process into the ER membrane. Associates with the second TM domain of G-protein-coupled receptor opsin/OPSD nascent chain in the ER membrane, which may facilitate its integration into the membrane. Under conditions of ER stress, participates in the disposal of misfolded ER membrane proteins during the unfolded protein response (UPR), an integrated stress response (ISR) pathway, by selectively retrotranslocating misfolded ER-membrane proteins from the ER into the cytosol where they are ubiquitinated and degraded by the proteasome. The protein is Translocating chain-associated membrane protein 1 (TRAM1) of Bos taurus (Bovine).